The sequence spans 137 residues: MLQPKRTKFRKQMTGHNRGLAHRGSKVSFGEYALKATSRGRLTARQIESARRALTRHVKRGGKIWIRVFPDKPVTKKPLEVRMGKGKGGVEYWVAQIQPGKVLYEIEGVSEELAREAFALAAAKLPLATSFVKRTVM.

This sequence belongs to the universal ribosomal protein uL16 family. In terms of assembly, part of the 50S ribosomal subunit.

Binds 23S rRNA and is also seen to make contacts with the A and possibly P site tRNAs. The polypeptide is Large ribosomal subunit protein uL16 (Pseudomonas aeruginosa (strain LESB58)).